The primary structure comprises 215 residues: UPF0502 protein YceH (215 aa).

It belongs to the UPF0502 family.

The protein is UPF0502 protein YceH of Salmonella schwarzengrund (strain CVM19633).